A 448-amino-acid chain; its full sequence is Homogentisate 1,2-dioxygenase (448 aa).

Histidine 302 (proton acceptor) is an active-site residue. Fe cation-binding residues include histidine 345 and glutamate 351. Homogentisate is bound by residues tyrosine 360 and histidine 381. Fe cation is bound at residue histidine 381.

It belongs to the homogentisate dioxygenase family. Hexamer; dimer of trimers. Requires Fe cation as cofactor.

The enzyme catalyses homogentisate + O2 = 4-maleylacetoacetate + H(+). Its pathway is amino-acid degradation; L-phenylalanine degradation; acetoacetate and fumarate from L-phenylalanine: step 4/6. In terms of biological role, involved in the catabolism of homogentisate (2,5-dihydroxyphenylacetate or 2,5-OH-PhAc), a central intermediate in the degradation of phenylalanine and tyrosine. Catalyzes the oxidative ring cleavage of the aromatic ring of homogentisate to yield maleylacetoacetate. This chain is Homogentisate 1,2-dioxygenase, found in Ralstonia pickettii (strain 12J).